We begin with the raw amino-acid sequence, 295 residues long: Protein transport protein SSO2 (295 aa).

A compositionally biased stretch (low complexity) spans 1–18; that stretch reads MSNPYQNSQNGYQQNNSY. A disordered region spans residues 1–31; the sequence is MSNPYQNSQNGYQQNNSYELNNYPNKQYSSS. At 1 to 270 the chain is on the cytoplasmic side; it reads MSNPYQNSQN…SAKSARKKKL (270 aa). Residues 19-31 are compositionally biased toward polar residues; it reads ELNNYPNKQYSSS. Residues 33–110 adopt a coiled-coil conformation; it reads EDDFVQFMNE…NRIKNVQTQA (78 aa). The t-SNARE coiled-coil homology domain occupies 196–258; the sequence is LNEVQVRHRE…EQGVGHTNKA (63 aa). A helical; Anchor for type IV membrane protein membrane pass occupies residues 271–291; it reads WCFFICLLIVIILAVILGAYF. Over 292 to 295 the chain is Extracellular; the sequence is GTRK.

It belongs to the syntaxin family.

The protein localises to the membrane. Functionally, late secretory t-SNARE protein required for secretion and proper cytokinesis. Plays an important role in the secretion of virulence-associated extracellular enzymes and vesicle-mediated polarized hyphal growth. This chain is Protein transport protein SSO2 (SSO2), found in Candida albicans (strain SC5314 / ATCC MYA-2876) (Yeast).